Reading from the N-terminus, the 213-residue chain is Thymidylate kinase (213 aa).

Glycine 10 to threonine 17 contributes to the ATP binding site.

Belongs to the thymidylate kinase family.

It catalyses the reaction dTMP + ATP = dTDP + ADP. In terms of biological role, phosphorylation of dTMP to form dTDP in both de novo and salvage pathways of dTTP synthesis. The protein is Thymidylate kinase of Klebsiella pneumoniae subsp. pneumoniae (strain ATCC 700721 / MGH 78578).